A 553-amino-acid polypeptide reads, in one-letter code: Coiled-coil domain-containing protein 22 homolog (553 aa).

2 coiled-coil regions span residues Leu261–Gln404 and Asn498–Ala553.

Belongs to the CCDC22 family.

The polypeptide is Coiled-coil domain-containing protein 22 homolog (Drosophila pseudoobscura pseudoobscura (Fruit fly)).